The sequence spans 384 residues: S-adenosylmethionine synthase (384 aa).

Residue histidine 15 participates in ATP binding. Mg(2+) is bound at residue aspartate 17. K(+) is bound at residue glutamate 43. L-methionine-binding residues include glutamate 56 and glutamine 99. A flexible loop region spans residues 99–109 (QSADINQGVDR). ATP-binding positions include 164–166 (DAK), 230–231 (RF), aspartate 239, 245–246 (RK), alanine 262, and lysine 266. Aspartate 239 is an L-methionine binding site. An L-methionine-binding site is contributed by lysine 270.

The protein belongs to the AdoMet synthase family. As to quaternary structure, homotetramer; dimer of dimers. Mg(2+) serves as cofactor. Requires K(+) as cofactor.

It localises to the cytoplasm. The catalysed reaction is L-methionine + ATP + H2O = S-adenosyl-L-methionine + phosphate + diphosphate. It participates in amino-acid biosynthesis; S-adenosyl-L-methionine biosynthesis; S-adenosyl-L-methionine from L-methionine: step 1/1. Catalyzes the formation of S-adenosylmethionine (AdoMet) from methionine and ATP. The overall synthetic reaction is composed of two sequential steps, AdoMet formation and the subsequent tripolyphosphate hydrolysis which occurs prior to release of AdoMet from the enzyme. This is S-adenosylmethionine synthase from Haemophilus influenzae (strain ATCC 51907 / DSM 11121 / KW20 / Rd).